Reading from the N-terminus, the 576-residue chain is Proline--tRNA ligase (576 aa).

The protein belongs to the class-II aminoacyl-tRNA synthetase family. ProS type 1 subfamily. As to quaternary structure, homodimer.

The protein localises to the cytoplasm. It carries out the reaction tRNA(Pro) + L-proline + ATP = L-prolyl-tRNA(Pro) + AMP + diphosphate. Catalyzes the attachment of proline to tRNA(Pro) in a two-step reaction: proline is first activated by ATP to form Pro-AMP and then transferred to the acceptor end of tRNA(Pro). As ProRS can inadvertently accommodate and process non-cognate amino acids such as alanine and cysteine, to avoid such errors it has two additional distinct editing activities against alanine. One activity is designated as 'pretransfer' editing and involves the tRNA(Pro)-independent hydrolysis of activated Ala-AMP. The other activity is designated 'posttransfer' editing and involves deacylation of mischarged Ala-tRNA(Pro). The misacylated Cys-tRNA(Pro) is not edited by ProRS. The chain is Proline--tRNA ligase from Magnetococcus marinus (strain ATCC BAA-1437 / JCM 17883 / MC-1).